Here is a 281-residue protein sequence, read N- to C-terminus: Non-selective voltage-gated ion channel 2 (281 aa).

R11 and R19 together coordinate ATP.

The protein belongs to the eukaryotic mitochondrial porin family.

The protein localises to the mitochondrion outer membrane. Non-selective voltage-gated ion channel that mediates the transport of anions and cations through the mitochondrion outer membrane. The channel adopts an open conformation at low or zero membrane potential and a closed conformation at potentials above 30-40 mV. The open state has a weak anion selectivity whereas the closed state is cation-selective. Does not confer permeability to NADH. Functionally, catalyzes the scrambling of phospholipids across the outer mitochondrial membrane; the mechanism is unrelated to channel activity and is capable of translocating both anionic and zwitterionic phospholipids. In Saccharomyces cerevisiae (strain ATCC 204508 / S288c) (Baker's yeast), this protein is Non-selective voltage-gated ion channel 2 (POR2).